A 405-amino-acid chain; its full sequence is GTPase Obg (405 aa).

Residues 1-159 form the Obg domain; the sequence is MRFIDEAVVT…KVLKFELKVV (159 aa). The OBG-type G domain maps to 160–333; it reads ADVGLIGLPN…IKYHLMNEIE (174 aa). GTP contacts are provided by residues 166-173, 191-195, 213-216, 283-286, and 314-316; these read GLPNAGKS, FTTLV, DIPG, NKID, and ATL. Residues Ser173 and Thr193 each contribute to the Mg(2+) site. Basic and acidic residues predominate over residues 371–382; it reads YRAARKAAREGT. Residues 371-405 form a disordered region; it reads YRAARKAAREGTDLSDDDFDGSDDDDDGVEVIYAP. Positions 383–399 are enriched in acidic residues; that stretch reads DLSDDDFDGSDDDDDGV.

This sequence belongs to the TRAFAC class OBG-HflX-like GTPase superfamily. OBG GTPase family. As to quaternary structure, monomer. Mg(2+) serves as cofactor.

Its subcellular location is the cytoplasm. Functionally, an essential GTPase which binds GTP, GDP and possibly (p)ppGpp with moderate affinity, with high nucleotide exchange rates and a fairly low GTP hydrolysis rate. Plays a role in control of the cell cycle, stress response, ribosome biogenesis and in those bacteria that undergo differentiation, in morphogenesis control. In Psychrobacter arcticus (strain DSM 17307 / VKM B-2377 / 273-4), this protein is GTPase Obg.